The primary structure comprises 365 residues: tRNA N6-adenosine threonylcarbamoyltransferase (365 aa).

H119 and H123 together coordinate Fe cation. Residues 141 to 145 (LVSGG), D174, and G187 each bind substrate. Residues 184–203 (QPGGPSVEGEARQGDPKRFR) form a disordered region. A compositionally biased stretch (basic and acidic residues) spans 192 to 201 (GEARQGDPKR). N289 contacts substrate. D317 serves as a coordination point for Fe cation. The tract at residues 342 to 365 (ARPRWPLDQSSPAMLGSGKKGAKA) is disordered.

It belongs to the KAE1 / TsaD family. Fe(2+) is required as a cofactor.

It is found in the cytoplasm. The enzyme catalyses L-threonylcarbamoyladenylate + adenosine(37) in tRNA = N(6)-L-threonylcarbamoyladenosine(37) in tRNA + AMP + H(+). Required for the formation of a threonylcarbamoyl group on adenosine at position 37 (t(6)A37) in tRNAs that read codons beginning with adenine. Is involved in the transfer of the threonylcarbamoyl moiety of threonylcarbamoyl-AMP (TC-AMP) to the N6 group of A37, together with TsaE and TsaB. TsaD likely plays a direct catalytic role in this reaction. This Ruegeria pomeroyi (strain ATCC 700808 / DSM 15171 / DSS-3) (Silicibacter pomeroyi) protein is tRNA N6-adenosine threonylcarbamoyltransferase.